Reading from the N-terminus, the 152-residue chain is Transcriptional regulator MraZ (152 aa).

2 SpoVT-AbrB domains span residues 5-52 (ASAI…PLDE) and 81-124 (AHEC…DETA).

The protein belongs to the MraZ family. As to quaternary structure, forms oligomers.

It localises to the cytoplasm. The protein localises to the nucleoid. The polypeptide is Transcriptional regulator MraZ (Shewanella woodyi (strain ATCC 51908 / MS32)).